The chain runs to 895 residues: Receptor-like protein kinase FERONIA (895 aa).

The first 27 residues, 1 to 27, serve as a signal peptide directing secretion; that stretch reads MKITEGRFRLSLLLLLLLISAATLISA. The Extracellular segment spans residues 28–447; sequence ADYSPTEKIL…TTRKSKSNTA (420 aa). Residues asparagine 46, asparagine 124, asparagine 142, asparagine 171, asparagine 219, asparagine 269, asparagine 305, asparagine 330, asparagine 345, and asparagine 410 are each glycosylated (N-linked (GlcNAc...) asparagine). Residues 448-468 form a helical membrane-spanning segment; it reads IIAGAASGAVVLALIIGFCVF. Residues 469 to 895 are Cytoplasmic-facing; that stretch reads GAYRRRKRGD…FSQIMNPKGR (427 aa). Residues 536–810 form the Protein kinase domain; it reads FDESRVLGVG…GDVLWNLEFA (275 aa). Residues 542–550 and lysine 565 contribute to the ATP site; that span reads LGVGGFGKV. The Proton acceptor role is filled by aspartate 661. The disordered stretch occupies residues 844–895; sequence NDKSSDVYEGNVTDSRSSGIDMSIGGRSLASEDSDGLTPSAVFSQIMNPKGR. 4 positions are modified to phosphoserine: serine 858, serine 866, serine 871, and serine 874. A compositionally biased stretch (polar residues) spans 884 to 895; it reads AVFSQIMNPKGR.

The protein belongs to the protein kinase superfamily. Ser/Thr protein kinase family. In terms of assembly, interacts with ROPGEF1. Interacts with RALF1; triggering phosphorylation status and subsequent activation. Interacts with LRE and LLG1. Interacts, via its extracellular domain, with FERONIA at the synergid cell surface. In terms of processing, autophosphorylated. Post-translationally, phosphorylated at Ser-858, Ser-871 and Ser-874 upon activation by RALF1. In terms of tissue distribution, expressed in leaves, buds, flowers, siliques, young ovules primordia, and young anthers with immature pollen, but not detected in mature pollen. Highest expression in the synergid cells of the female gametophyte.

Its subcellular location is the cell membrane. It catalyses the reaction L-seryl-[protein] + ATP = O-phospho-L-seryl-[protein] + ADP + H(+). The catalysed reaction is L-threonyl-[protein] + ATP = O-phospho-L-threonyl-[protein] + ADP + H(+). Its function is as follows. Receptor-like protein kinase that mediates the female control of male gamete delivery during fertilization, including growth cessation of compatible pollen tubes ensuring a reproductive isolation barriers, by regulating MLO7 subcellular polarization upon pollen tube perception in the female gametophyte synergids. Required for cell elongation during vegetative growth, mostly in a brassinosteroids- (BR-) independent manner. Acts as an upstream regulator for the Rac/Rop-signaling pathway that controls ROS-mediated root hair development. Seems to regulate a cross-talk between brassinosteroids and ethylene signaling pathways during hypocotyl elongation. Negative regulator of brassinosteroid response in light-grown hypocotyls, but required for brassinosteroid response in etiolated seedlings. Mediates sensitivity to powdery mildew (e.g. Golovinomyces orontii). Positive regulator of auxin-promoted growth that represses the abscisic acid (ABA) signaling via the activation of ABI2 phosphatase. Required for RALF1-mediated extracellular alkalinization in a signaling pathway preventing cell expansion. In Arabidopsis thaliana (Mouse-ear cress), this protein is Receptor-like protein kinase FERONIA.